A 113-amino-acid chain; its full sequence is Transcriptional activator RamA (113 aa).

Residues 9–107 (DTIVEWIDDN…HQPPGAYRKE (99 aa)) form the HTH araC/xylS-type domain. 2 DNA-binding regions (H-T-H motif) span residues 26–47 (EDIARHAGYSKWHLQRLFLQYK) and 74–97 (VYEICLRYGFESQQTFTRIFTRTF).

Its function is as follows. Probable transcriptional activator. This is Transcriptional activator RamA (ramA) from Enterobacter cloacae.